Consider the following 271-residue polypeptide: MSNSPIQAVIFDWAGTIVDFGSFAPTSIFVEAFKQGFDFDIDLEEAREPMGLGKWDHIQAVGRIPAVDKRWNEKFGRSMTNEDIDAIYAAFMPLQKAKVADHAEPILNAVEVVNGLKDKGIKIGSCSGYPREVMDVLIPVAADYGYQPDYVVATDDLPQGGRPAPFMALKNVIELDVTDVKACVKVDDSAPGIFEGHNAGMWTVGLLLSGNEAGLTFEEYQAADEATLEKAREKARAKFIKSAPHYLIDTISDLPEVIVDIEQRLAAGERP.

Asp12 serves as the catalytic Nucleophile. Mg(2+)-binding residues include Asp12 and Ala14. Lys54 acts as the Schiff-base intermediate with substrate in catalysis. Position 188 (Asp188) interacts with Mg(2+).

It belongs to the HAD-like hydrolase superfamily. PhnX family. Homodimer. Mg(2+) is required as a cofactor.

The catalysed reaction is phosphonoacetaldehyde + H2O = acetaldehyde + phosphate + H(+). Involved in phosphonate degradation. The protein is Phosphonoacetaldehyde hydrolase of Vibrio parahaemolyticus serotype O3:K6 (strain RIMD 2210633).